The chain runs to 744 residues: NAD(P)H-quinone oxidoreductase subunit 5, chloroplastic (744 aa).

Helical transmembrane passes span 9-29 (WIMPFIPLPVPMLIGVGLLLF), 41-61 (AFPTLFLLGLVMLLSAYFFIL), 89-109 (VDPLTSIMSILITTVGITVLI), 125-145 (FSYMTLFHVSMLGLVTSSNLI), 147-167 (IYICWEFVGMFSYLLIGFWFT), 185-205 (GDFSFLLGILGLYWITGSFEF), 219-239 (NEIPFFFLTLCAFLLFGGALA), 258-278 (TPISALIHAATMVAAGIFLVA), 280-300 (LLPLFIVMPYILNLISFIGII), 327-347 (LGYMMLALGMGSYRAALFHLI), 354-374 (ALLFLGAGSIIHSMEAFVGYS), 396-416 (TSFLLGTLSLCGIPPLACFWS), 425-445 (WLYSPIFAIIACSTTGFTAFY), 546-566 (LFPMVLLVLFTLFVGAIGIPF), 600-620 (FIPNATLSVSLSYFGIVIASV), and 722-742 (LLLYFDCVLLFLFISSFLYLF).

It belongs to the complex I subunit 5 family. NDH is composed of at least 16 different subunits, 5 of which are encoded in the nucleus.

Its subcellular location is the plastid. It localises to the chloroplast thylakoid membrane. The catalysed reaction is a plastoquinone + NADH + (n+1) H(+)(in) = a plastoquinol + NAD(+) + n H(+)(out). The enzyme catalyses a plastoquinone + NADPH + (n+1) H(+)(in) = a plastoquinol + NADP(+) + n H(+)(out). Functionally, NDH shuttles electrons from NAD(P)H:plastoquinone, via FMN and iron-sulfur (Fe-S) centers, to quinones in the photosynthetic chain and possibly in a chloroplast respiratory chain. The immediate electron acceptor for the enzyme in this species is believed to be plastoquinone. Couples the redox reaction to proton translocation, and thus conserves the redox energy in a proton gradient. The sequence is that of NAD(P)H-quinone oxidoreductase subunit 5, chloroplastic (ndhF) from Pelargonium hortorum (Common geranium).